An 846-amino-acid chain; its full sequence is Protein kintoun (846 aa).

Disordered stretches follow at residues 1–21 (MSTAAGSRKKHSKLHNEERAD), 372–416 (YLSR…PALT), 581–657 (HTSI…DSTI), and 743–846 (HDSS…DDEI). Phosphoserine is present on Ser378. The span at 389-403 (PVEDDADGDMPETPE) shows a compositional bias: acidic residues. Composition is skewed to basic residues over residues 596 to 612 (LHKKPSKKQRKRNKKQR) and 750 to 766 (QRKKNQKRRNCKLRAQQ). Position 770 is a phosphoserine (Ser770). The segment covering 821–832 (TRQDHADADAKN) has biased composition (basic and acidic residues).

Belongs to the PIH1 family. Kintoun subfamily. As to quaternary structure, interacts with Pp1alpha-96A, Pp1-87B, Pp1-13C and flw.

It is found in the cytoplasm. Functionally, required for cytoplasmic pre-assembly of axonemal dyneins, thereby playing a central role in motility in cilia and flagella. Involved in pre-assembly of dynein arm complexes in the cytoplasm before intraflagellar transport loads them for the ciliary compartment. The protein is Protein kintoun of Drosophila persimilis (Fruit fly).